The sequence spans 580 residues: N(6)-adenosine-methyltransferase catalytic subunit METTL3 (580 aa).

The tract at residues 1–70 is disordered; it reads MSDTWSSIQA…PKPSTASAVP (70 aa). Serine 2 bears the N-acetylserine; alternate mark. Position 2 is a phosphoserine; alternate (serine 2). The span at 28-37 shows a compositional bias: basic and acidic residues; sequence QDSGHLDLRN. Phosphoserine occurs at positions 43, 48, and 50. Residues lysine 177, lysine 211, lysine 212, and lysine 215 each participate in a glycyl lysine isopeptide (Lys-Gly) (interchain with G-Cter in SUMO1) cross-link. Positions 198–219 are disordered; it reads LNSSASEPAKEPAKKSRKHAAS. The Nuclear localization signal motif lies at 210–215; that stretch reads AKKSRK. Phosphoserine is present on residues serine 219 and serine 243. Threonine 348 is modified (phosphothreonine). Serine 350 is subject to Phosphoserine. S-adenosyl-L-methionine is bound by residues 377 to 378 and aspartate 395; that span reads DI. The interval 396–410 is gate loop 1; it reads PPWDIHMELPYGTLT. Interaction with METTL14 stretches follow at residues 450-454 and 464-480; these read ERVDE and QRII…NHGK. An interphase loop region spans residues 462-479; that stretch reads QLQRIIRTGRTGHWLNHG. Residues 465–478 are positively charged region required for RNA-binding; sequence RIIRTGRTGHWLNH. Positions 507 to 515 are gate loop 2; sequence VRSTSHKPD. S-adenosyl-L-methionine is bound by residues lysine 513, 536–539, and 549–550; these read RPHN and NQ.

This sequence belongs to the MT-A70-like family. In terms of assembly, heterodimer; heterodimerizes with METTL14 to form an antiparallel heterodimer that constitutes an active methyltransferase. Component of the WMM complex, a N6-methyltransferase complex composed of a catalytic subcomplex, named MAC, and of an associated subcomplex, named MACOM. The MAC subcomplex is composed of METTL3 and METTL14. The MACOM subcomplex is composed of WTAP, ZC3H13, CBLL1/HAKAI, VIRMA, and, in some cases of RBM15 (RBM15 or RBM15B). Interacts with NCBP1/CBP80. Interacts with EIF4E. Interacts with EIF3B. In terms of processing, sumoylation inhibits the N6-adenosine-methyltransferase activity. Sumoylation does not affect subcellular location or interaction with METTL14. Desumoylated by SENP1. As to expression, widely expressed at low level. Expressed in spleen, thymus, prostate, testis, ovary, small intestine, colon and peripheral blood leukocytes.

The protein resides in the nucleus. Its subcellular location is the nucleus speckle. It is found in the cytoplasm. The catalysed reaction is an adenosine in mRNA + S-adenosyl-L-methionine = an N(6)-methyladenosine in mRNA + S-adenosyl-L-homocysteine + H(+). With respect to regulation, methyltransferase activity is regulated by miRNAs via a sequence pairing mechanism. Methyltransferase activity is inhibited by sumoylation. Its function is as follows. The METTL3-METTL14 heterodimer forms a N6-methyltransferase complex that methylates adenosine residues at the N(6) position of some RNAs and regulates various processes such as the circadian clock, differentiation of embryonic and hematopoietic stem cells, cortical neurogenesis, response to DNA damage, differentiation of T-cells and primary miRNA processing. In the heterodimer formed with METTL14, METTL3 constitutes the catalytic core. N6-methyladenosine (m6A), which takes place at the 5'-[AG]GAC-3' consensus sites of some mRNAs, plays a role in mRNA stability, processing, translation efficiency and editing. M6A acts as a key regulator of mRNA stability: methylation is completed upon the release of mRNA into the nucleoplasm and promotes mRNA destabilization and degradation. In embryonic stem cells (ESCs), m6A methylation of mRNAs encoding key naive pluripotency-promoting transcripts results in transcript destabilization, promoting differentiation of ESCs. M6A regulates the length of the circadian clock: acts as an early pace-setter in the circadian loop by putting mRNA production on a fast-track for facilitating nuclear processing, thereby providing an early point of control in setting the dynamics of the feedback loop. M6A also regulates circadian regulation of hepatic lipid metabolism. M6A regulates spermatogonial differentiation and meiosis and is essential for male fertility and spermatogenesis. Also required for oogenesis. Involved in the response to DNA damage: in response to ultraviolet irradiation, METTL3 rapidly catalyzes the formation of m6A on poly(A) transcripts at DNA damage sites, leading to the recruitment of POLK to DNA damage sites. M6A is also required for T-cell homeostasis and differentiation: m6A methylation of transcripts of SOCS family members (SOCS1, SOCS3 and CISH) in naive T-cells promotes mRNA destabilization and degradation, promoting T-cell differentiation. Inhibits the type I interferon response by mediating m6A methylation of IFNB. M6A also takes place in other RNA molecules, such as primary miRNA (pri-miRNAs). Mediates m6A methylation of Xist RNA, thereby participating in random X inactivation: m6A methylation of Xist leads to target YTHDC1 reader on Xist and promote transcription repression activity of Xist. M6A also regulates cortical neurogenesis: m6A methylation of transcripts related to transcription factors, neural stem cells, the cell cycle and neuronal differentiation during brain development promotes their destabilization and decay, promoting differentiation of radial glial cells. METTL3 mediates methylation of pri-miRNAs, marking them for recognition and processing by DGCR8. Acts as a positive regulator of mRNA translation independently of the methyltransferase activity: promotes translation by interacting with the translation initiation machinery in the cytoplasm. Its overexpression in a number of cancer cells suggests that it may participate in cancer cell proliferation by promoting mRNA translation. During human coronavirus SARS-CoV-2 infection, adds m6A modifications in SARS-CoV-2 RNA leading to decreased RIGI binding and subsequently dampening the sensing and activation of innate immune responses. This is N(6)-adenosine-methyltransferase catalytic subunit METTL3 from Homo sapiens (Human).